We begin with the raw amino-acid sequence, 277 residues long: Large ribosomal subunit protein uL2 (277 aa).

The segment at 222–277 (GSVMNPNDHPHGGGEGKAPVGRKAPSTPWGKPALGLKTRNKKAKSDKLIVRRRNQK) is disordered.

The protein belongs to the universal ribosomal protein uL2 family. In terms of assembly, part of the 50S ribosomal subunit. Forms a bridge to the 30S subunit in the 70S ribosome.

In terms of biological role, one of the primary rRNA binding proteins. Required for association of the 30S and 50S subunits to form the 70S ribosome, for tRNA binding and peptide bond formation. It has been suggested to have peptidyltransferase activity; this is somewhat controversial. Makes several contacts with the 16S rRNA in the 70S ribosome. The polypeptide is Large ribosomal subunit protein uL2 (Streptococcus agalactiae serotype Ia (strain ATCC 27591 / A909 / CDC SS700)).